Here is an 807-residue protein sequence, read N- to C-terminus: Phenylalanine--tRNA ligase beta subunit (807 aa).

The 115-residue stretch at 39-153 folds into the tRNA-binding domain; the sequence is SARAQGVVVG…SLPPNGSPVA (115 aa). One can recognise a B5 domain in the interval 407 to 491; that stretch reads AEAGPVLLRR…RLVGFDRFGA (85 aa). D469, D475, E478, and E479 together coordinate Mg(2+). Residues 713 to 806 enclose the FDX-ACB domain; that stretch reads PTVPFSERDL…LSKQFQAELR (94 aa).

It belongs to the phenylalanyl-tRNA synthetase beta subunit family. Type 1 subfamily. Tetramer of two alpha and two beta subunits. Mg(2+) is required as a cofactor.

The protein resides in the cytoplasm. The catalysed reaction is tRNA(Phe) + L-phenylalanine + ATP = L-phenylalanyl-tRNA(Phe) + AMP + diphosphate + H(+). This Synechococcus sp. (strain CC9605) protein is Phenylalanine--tRNA ligase beta subunit.